A 185-amino-acid chain; its full sequence is MKAEAVESGEASTIIAAPKRGINRGISIADLILRGVAAIGTFASALTMGTTSETLTIFTQPIMIRAKYNDLPSLTFFVIANSIVCGYLVLSIPLSISHFIRREARITRIILVIFDTAMVELLTAGASAATVVVYLAHKRNANWLAICQQFNNFCERISGSLIGSFASIIMIMLIIITSAVALSRH.

The Cytoplasmic segment spans residues 1–25; it reads MKAEAVESGEASTIIAAPKRGINRG. A helical membrane pass occupies residues 26-46; the sequence is ISIADLILRGVAAIGTFASAL. At 47-75 the chain is on the extracellular side; the sequence is TMGTTSETLTIFTQPIMIRAKYNDLPSLT. A helical transmembrane segment spans residues 76–96; sequence FFVIANSIVCGYLVLSIPLSI. The Cytoplasmic segment spans residues 97 to 108; sequence SHFIRREARITR. A helical transmembrane segment spans residues 109–129; the sequence is IILVIFDTAMVELLTAGASAA. Over 130-160 the chain is Extracellular; it reads TVVVYLAHKRNANWLAICQQFNNFCERISGS. Residues 161–181 form a helical membrane-spanning segment; sequence LIGSFASIIMIMLIIITSAVA. The Cytoplasmic segment spans residues 182 to 185; sequence LSRH.

It belongs to the Casparian strip membrane proteins (CASP) family. In terms of assembly, homodimer and heterodimers.

The protein localises to the cell membrane. Functionally, regulates membrane-cell wall junctions and localized cell wall deposition. Required for establishment of the Casparian strip membrane domain (CSD) and the subsequent formation of Casparian strips, a cell wall modification of the root endodermis that determines an apoplastic barrier between the intraorganismal apoplasm and the extraorganismal apoplasm and prevents lateral diffusion. The protein is Casparian strip membrane protein 5 of Populus trichocarpa (Western balsam poplar).